We begin with the raw amino-acid sequence, 320 residues long: Ferrochelatase (320 aa).

Fe cation is bound by residues His194 and Glu275.

It belongs to the ferrochelatase family.

Its subcellular location is the cytoplasm. The catalysed reaction is heme b + 2 H(+) = protoporphyrin IX + Fe(2+). It functions in the pathway porphyrin-containing compound metabolism; protoheme biosynthesis; protoheme from protoporphyrin-IX: step 1/1. Catalyzes the ferrous insertion into protoporphyrin IX. This chain is Ferrochelatase, found in Yersinia pestis bv. Antiqua (strain Antiqua).